We begin with the raw amino-acid sequence, 449 residues long: Exodeoxyribonuclease 7 large subunit (449 aa).

Belongs to the XseA family. Heterooligomer composed of large and small subunits.

It localises to the cytoplasm. The catalysed reaction is Exonucleolytic cleavage in either 5'- to 3'- or 3'- to 5'-direction to yield nucleoside 5'-phosphates.. Its function is as follows. Bidirectionally degrades single-stranded DNA into large acid-insoluble oligonucleotides, which are then degraded further into small acid-soluble oligonucleotides. This is Exodeoxyribonuclease 7 large subunit from Aliivibrio fischeri (strain ATCC 700601 / ES114) (Vibrio fischeri).